The chain runs to 142 residues: Hemoglobin subunit alpha (142 aa).

In terms of domain architecture, Globin spans 2–142 (VLSSQNKKAI…VAYELSSCYR (141 aa)). Residue His-60 participates in O2 binding. His-89 contributes to the heme b binding site.

The protein belongs to the globin family. In terms of assembly, heterotetramer of two alpha chains and two beta chains. As to expression, red blood cells.

Its function is as follows. Involved in oxygen transport from gills to the various peripheral tissues. The protein is Hemoglobin subunit alpha (hba) of Hemitrygon akajei (Red stingray).